The primary structure comprises 324 residues: DNA repair and recombination protein RadA (324 aa).

114–121 (GEFGSGKT) is an ATP binding site.

Belongs to the eukaryotic RecA-like protein family.

Involved in DNA repair and in homologous recombination. Binds and assemble on single-stranded DNA to form a nucleoprotein filament. Hydrolyzes ATP in a ssDNA-dependent manner and promotes DNA strand exchange between homologous DNA molecules. In Sulfurisphaera tokodaii (strain DSM 16993 / JCM 10545 / NBRC 100140 / 7) (Sulfolobus tokodaii), this protein is DNA repair and recombination protein RadA.